The sequence spans 58 residues: Small ribosomal subunit protein bS21 (58 aa).

A disordered region spans residues Arg-35–Lys-58. Basic residues predominate over residues Val-43–Lys-58.

Belongs to the bacterial ribosomal protein bS21 family.

The polypeptide is Small ribosomal subunit protein bS21 (Clostridium botulinum (strain Alaska E43 / Type E3)).